The following is a 175-amino-acid chain: Large ribosomal subunit protein bL17 (175 aa).

The tract at residues G127 to A175 is disordered. Positions A131–A147 are enriched in basic and acidic residues.

It belongs to the bacterial ribosomal protein bL17 family. Part of the 50S ribosomal subunit. Contacts protein L32.

The protein is Large ribosomal subunit protein bL17 of Streptomyces griseus subsp. griseus (strain JCM 4626 / CBS 651.72 / NBRC 13350 / KCC S-0626 / ISP 5235).